Here is a 268-residue protein sequence, read N- to C-terminus: Undecaprenyl-diphosphatase (268 aa).

Transmembrane regions (helical) follow at residues 4 to 24, 50 to 70, 84 to 104, 109 to 129, 144 to 164, 185 to 205, 214 to 234, and 247 to 267; these read STTL…FIPV, IQLG…VSVI, VAVL…HGFI, FETP…LLFV, LPLN…VPGV, AEFS…FDLF, SALG…VLVV, and ALFG…LLAG.

This sequence belongs to the UppP family.

The protein resides in the cell inner membrane. It carries out the reaction di-trans,octa-cis-undecaprenyl diphosphate + H2O = di-trans,octa-cis-undecaprenyl phosphate + phosphate + H(+). Its function is as follows. Catalyzes the dephosphorylation of undecaprenyl diphosphate (UPP). Confers resistance to bacitracin. The protein is Undecaprenyl-diphosphatase of Cereibacter sphaeroides (strain ATCC 17029 / ATH 2.4.9) (Rhodobacter sphaeroides).